Consider the following 262-residue polypeptide: Phosphate import ATP-binding protein PstB (262 aa).

The 242-residue stretch at 16–257 folds into the ABC transporter domain; that stretch reads IDVRNLNFYY…PHRKETEDYI (242 aa). 48–55 is a binding site for ATP; the sequence is GPSGCGKS.

It belongs to the ABC transporter superfamily. Phosphate importer (TC 3.A.1.7) family. As to quaternary structure, the complex is composed of two ATP-binding proteins (PstB), two transmembrane proteins (PstC and PstA) and a solute-binding protein (PstS).

It is found in the cell inner membrane. It catalyses the reaction phosphate(out) + ATP + H2O = ADP + 2 phosphate(in) + H(+). Functionally, part of the ABC transporter complex PstSACB involved in phosphate import. Responsible for energy coupling to the transport system. In Cupriavidus pinatubonensis (strain JMP 134 / LMG 1197) (Cupriavidus necator (strain JMP 134)), this protein is Phosphate import ATP-binding protein PstB.